A 254-amino-acid chain; its full sequence is Phytolongin Phyl1.1 (254 aa).

Positions 12 to 113 (CVSRDNQILY…TAMIGSINVE (102 aa)) constitute a Longin domain. The tract at residues 138-173 (ELKSSNLGEQSEGSNSTKAPLLGRLSKQEKKKGKDH) is disordered. Polar residues predominate over residues 145-155 (GEQSEGSNSTK). A helical; Anchor for type IV membrane protein transmembrane segment spans residues 226–246 (IVLAIDAAICLTLFGIWLAIC).

This sequence belongs to the synaptobrevin family.

Its subcellular location is the membrane. Functionally, non-SNARE longin protein involved in membrane-trafficking machinery. This chain is Phytolongin Phyl1.1, found in Arabidopsis thaliana (Mouse-ear cress).